The chain runs to 359 residues: Structure-specific endonuclease subunit SLX1 homolog (359 aa).

The GIY-YIG domain occupies 9–91 (GLFACYCLVA…TYPTRSRYVN (83 aa)). The segment at 192-238 (CPICQDGVSPSNVQCMQCSARFCITCAGKLFTRRNTLIPCFGKCPIC) adopts an SLX1-type zinc-finger fold. Residues 256–359 (VAGRKSVPHK…LPSDVISITD (104 aa)) form a disordered region. Residues 269 to 281 (VDGQSSLSQNSSY) are compositionally biased toward polar residues. The span at 295-306 (EPEKDDISRDES) shows a compositional bias: basic and acidic residues. Low complexity predominate over residues 316–326 (SSVALSDSSRS).

Belongs to the SLX1 family. As to quaternary structure, forms a heterodimer with a member of the SLX4 family. A divalent metal cation is required as a cofactor.

Its subcellular location is the nucleus. Functionally, catalytic subunit of a heterodimeric structure-specific endonuclease that resolves DNA secondary structures generated during DNA repair and recombination. Has endonuclease activity towards branched DNA substrates, introducing single-strand cuts in duplex DNA close to junctions with ss-DNA. In Giardia intestinalis (strain ATCC 50803 / WB clone C6) (Giardia lamblia), this protein is Structure-specific endonuclease subunit SLX1 homolog.